The chain runs to 632 residues: Putative golgin subfamily A member 8I (632 aa).

The tract at residues 1–77 is disordered; sequence MAEETQHNKL…SSATLKDLES (77 aa). Residues 38–50 show a composition bias toward polar residues; sequence TNGSIPQTATSGG. 2 coiled-coil regions span residues 86 to 154 and 209 to 421; these read LDSR…HMKR and KLEQ…SLMA. Residues 352-362 show a composition bias toward basic and acidic residues; it reads KQEERIQEQHK. Disordered regions lie at residues 352–383, 423–445, 496–524, and 550–569; these read KQEE…ENKS, PGEG…PMPS, LSEP…DEGE, and AHNP…ELGA. Over residues 508–520 the composition is skewed to gly residues; the sequence is LGGGHHQAGAQGG. Residues 529-632 are golgi-targeting domain; it reads AADGIAAYSN…CWAWLPRRRR (104 aa). A compositionally biased stretch (low complexity) spans 555–568; it reads DEPGPGAPAPQELG.

It belongs to the GOLGA8 family.

It localises to the golgi apparatus. The protein resides in the golgi stack membrane. Functionally, may be involved in maintaining Golgi structure. This is Putative golgin subfamily A member 8I from Homo sapiens (Human).